The primary structure comprises 512 residues: Maturase K (512 aa).

Belongs to the intron maturase 2 family. MatK subfamily.

It is found in the plastid. The protein localises to the chloroplast. Functionally, usually encoded in the trnK tRNA gene intron. Probably assists in splicing its own and other chloroplast group II introns. The protein is Maturase K of Lilium canadense (Canada lily).